Reading from the N-terminus, the 128-residue chain is uncharacterized protein (128 aa).

The disordered stretch occupies residues lysine 24–serine 43. The span at threonine 26 to serine 43 shows a compositional bias: polar residues.

This is an uncharacterized protein from Homo sapiens (Human).